Consider the following 303-residue polypeptide: Acetaldehyde dehydrogenase (303 aa).

13-16 (SGNI) contacts NAD(+). Cys-128 acts as the Acyl-thioester intermediate in catalysis. Residues 159 to 167 (SAGPGTRQN) and Asn-278 each bind NAD(+).

The protein belongs to the acetaldehyde dehydrogenase family.

It catalyses the reaction acetaldehyde + NAD(+) + CoA = acetyl-CoA + NADH + H(+). The polypeptide is Acetaldehyde dehydrogenase (Chloroflexus aggregans (strain MD-66 / DSM 9485)).